A 439-amino-acid polypeptide reads, in one-letter code: Na(+)/H(+) antiporter NhaA (439 aa).

The next 11 membrane-spanning stretches (helical) occupy residues 12 to 32 (SMNIAASILLFVAAIAAAIIA), 67 to 87 (MIEFINDGLMTIFFLLVGLEI), 103 to 123 (ALPFIAACGGMLFPVIVYMSI), 133 to 153 (GLAIPMATDIAFSLGVLSLLG), 162 to 182 (IFLTAFAVVDDIGGILVIALF), 186 to 206 (HVSYGYILIAALLYVLLYFIG), 214 to 234 (IFFLVIGVVIWYLFLQSGIHS), 314 to 334 (ILPLFAFVNAGVVFSGGGELV), 341 to 361 (VAAGLLFGKFAGIYFFTWLAI), 379 to 399 (GIALLGGIGFTVSLFIANLSF), and 412 to 432 (FGVLSGTILSGLLGYIVLRIV).

It belongs to the NhaA Na(+)/H(+) (TC 2.A.33) antiporter family.

Its subcellular location is the cell inner membrane. The catalysed reaction is Na(+)(in) + 2 H(+)(out) = Na(+)(out) + 2 H(+)(in). Its function is as follows. Na(+)/H(+) antiporter that extrudes sodium in exchange for external protons. In Bacteroides thetaiotaomicron (strain ATCC 29148 / DSM 2079 / JCM 5827 / CCUG 10774 / NCTC 10582 / VPI-5482 / E50), this protein is Na(+)/H(+) antiporter NhaA.